The following is a 332-amino-acid chain: 6-phosphogluconolactonase (332 aa).

Belongs to the cycloisomerase 2 family.

The catalysed reaction is 6-phospho-D-glucono-1,5-lactone + H2O = 6-phospho-D-gluconate + H(+). The protein operates within carbohydrate degradation; pentose phosphate pathway; D-ribulose 5-phosphate from D-glucose 6-phosphate (oxidative stage): step 2/3. Catalyzes the hydrolysis of 6-phosphogluconolactone to 6-phosphogluconate. The chain is 6-phosphogluconolactonase from Pectobacterium atrosepticum (strain SCRI 1043 / ATCC BAA-672) (Erwinia carotovora subsp. atroseptica).